The following is an 860-amino-acid chain: Protein argonaute-3 (860 aa).

Residues 230-349 (PVIQFMCEVL…LPLEVCNIVA (120 aa)) form the PAZ domain. Residues 518 to 819 (LIIVILPGKT…VAFRARYHLV (302 aa)) enclose the Piwi domain. Residues 530–567 (YAEVKRVGDTLLGMATQCVQVKNVVKTSPQTLSNLCLK) form an interaction with guide RNA region. 3 residues coordinate a divalent metal cation: Asp598, Glu638, and Asp670. The segment at 758-805 (QGTSRPSHYYVLWDDNCFTADEFQLLTYQLCHTYVRCTRSVSIPAPAY) is interaction with guide RNA. Residue His808 coordinates a divalent metal cation.

The protein belongs to the argonaute family. Ago subfamily.

Its subcellular location is the cytoplasm. It localises to the P-body. The enzyme catalyses Endonucleolytic cleavage to 5'-phosphomonoester.. Functionally, required for RNA-mediated gene silencing (RNAi). Binds to short RNAs such as microRNAs (miRNAs) and represses the translation of mRNAs which are complementary to them. Possesses RNA slicer activity but only on select RNAs bearing 5'- and 3'-flanking sequences to the region of guide-target complementarity. The sequence is that of Protein argonaute-3 (ago3) from Danio rerio (Zebrafish).